A 432-amino-acid chain; its full sequence is UDP-N-acetylglucosamine 1-carboxyvinyltransferase (432 aa).

22–23 (KN) is a binding site for phosphoenolpyruvate. Arginine 92 is a binding site for UDP-N-acetyl-alpha-D-glucosamine. Cysteine 116 functions as the Proton donor in the catalytic mechanism. At cysteine 116 the chain carries 2-(S-cysteinyl)pyruvic acid O-phosphothioketal. UDP-N-acetyl-alpha-D-glucosamine is bound by residues 121 to 125 (RPVDQ), aspartate 307, and isoleucine 329.

It belongs to the EPSP synthase family. MurA subfamily.

The protein resides in the cytoplasm. It carries out the reaction phosphoenolpyruvate + UDP-N-acetyl-alpha-D-glucosamine = UDP-N-acetyl-3-O-(1-carboxyvinyl)-alpha-D-glucosamine + phosphate. It functions in the pathway cell wall biogenesis; peptidoglycan biosynthesis. Cell wall formation. Adds enolpyruvyl to UDP-N-acetylglucosamine. The sequence is that of UDP-N-acetylglucosamine 1-carboxyvinyltransferase from Psychrobacter sp. (strain PRwf-1).